We begin with the raw amino-acid sequence, 66 residues long: Large ribosomal subunit protein bL33c (66 aa).

This sequence belongs to the bacterial ribosomal protein bL33 family.

Its subcellular location is the plastid. This is Large ribosomal subunit protein bL33c from Cuscuta gronovii (Common dodder).